Here is a 320-residue protein sequence, read N- to C-terminus: cUMP-AMP-activated phospholipase (320 aa).

A PNPLA domain is found at 23–204 (LALDGGGAKG…CANNPTLFAI (182 aa)). The short motif at 27–32 (GGGAKG) is the GXGXXG element. Positions 59-63 (GTSTG) match the GXSXG motif. The active-site Nucleophile is the Ser-61. Asp-191 (proton acceptor) is an active-site residue. Positions 191–193 (DGG) match the DGA/G motif.

Belongs to the patatin family.

The catalysed reaction is a 1,2-diacyl-sn-glycero-3-phosphocholine + H2O = a 2-acyl-sn-glycero-3-phosphocholine + a fatty acid + H(+). Its activity is regulated as follows. Phospholipase activity is specifically activated upon 3',3'-cUAMP binding. Is not activated by the other cyclic dinucleotides 3',3'-cGAMP, 3',3'-c-diAMP and 3',3'-c-diGMP. Therefore, is specifically activated by only the nucleotide synthesized from its adjacently encoded nucleotidyltransferase (CdnE). In terms of biological role, effector phospholipase of a CBASS antivirus system. CBASS (cyclic oligonucleotide-based antiphage signaling system) provides immunity against bacteriophage. The CD-NTase protein synthesizes cyclic nucleotides in response to infection; these serve as specific second messenger signals. The signals activate a diverse range of effectors, leading to bacterial cell death and thus abortive phage infection. A type II-A(UA) CBASS system. Phospholipase that is activated upon binding to the cyclic dinucleotide (CDN) second messenger 3',3'-cyclic UMP-AMP (3',3'-cUAMP). The chain is cUMP-AMP-activated phospholipase from Escherichia coli.